The sequence spans 343 residues: Aspartate carbamoyltransferase catalytic subunit (343 aa).

Carbamoyl phosphate is bound by residues Arg91 and Thr92. Lys119 provides a ligand contact to L-aspartate. Carbamoyl phosphate contacts are provided by Arg141, His171, and Gln174. Positions 204 and 259 each coordinate L-aspartate. Gly300 and Pro301 together coordinate carbamoyl phosphate.

This sequence belongs to the aspartate/ornithine carbamoyltransferase superfamily. ATCase family. Heterododecamer (2C3:3R2) of six catalytic PyrB chains organized as two trimers (C3), and six regulatory PyrI chains organized as three dimers (R2).

It catalyses the reaction carbamoyl phosphate + L-aspartate = N-carbamoyl-L-aspartate + phosphate + H(+). It participates in pyrimidine metabolism; UMP biosynthesis via de novo pathway; (S)-dihydroorotate from bicarbonate: step 2/3. In terms of biological role, catalyzes the condensation of carbamoyl phosphate and aspartate to form carbamoyl aspartate and inorganic phosphate, the committed step in the de novo pyrimidine nucleotide biosynthesis pathway. The polypeptide is Aspartate carbamoyltransferase catalytic subunit (Burkholderia cenocepacia (strain HI2424)).